Here is a 390-residue protein sequence, read N- to C-terminus: Neutrophil cytosol factor 1 (390 aa).

The region spanning 4–125 (TFIRHIALLG…DFFKVRPDDL (122 aa)) is the PX domain. 2 SH3 domains span residues 156 to 215 (IILQ…PLDS) and 226 to 285 (YAGE…KAGE). Residues 291–390 (QRQIRGRGAP…STKRKLTSAV (100 aa)) form a disordered region. Residues Ser-304, Ser-321, Ser-329, and Ser-346 each carry the phosphoserine modification. The span at 374 to 383 (ILHRCTESTK) shows a compositional bias: basic and acidic residues.

In terms of assembly, component of the phagocyte NADPH oxidase complex composed of an obligatory core heterodimer formed by the membrane proteins CYBA and CYBB and the cytosolic regulatory subunits NCF1/p47-phox, NCF2/p67-phox, NCF4/p40-phox and the small GTPase RAC1 or RAC2. Part of a cytosolic complex composed at least by NCF1, NCF2 and NCF4. Interacts (via C-terminus) with NCF2 (via the C-terminal SH3 domain). Interacts with NCF4. Interacts with CYBB. Interacts (via the second SH3 domain) with CYBA; interaction is phosphorylation-dependent. Interacts with NOXA1. Interacts with ADAM15. Interacts with TRAF4. Interacts with FASLG. Interacts with PARK7 (via C-terminus); the interaction is enhanced by LPS and modulates NCF1 phosphorylation and membrane translocation. In terms of processing, phosphorylated by PRKCD; phosphorylation induces activation of NCF1, leading to assembly and activation of the NADPH oxidase complex.

Its subcellular location is the cytoplasm. The protein localises to the cytosol. The protein resides in the membrane. Functionally, subunit of the phagocyte NADPH oxidase complex that mediates the transfer of electrons from cytosolic NADPH to O2 to produce the superoxide anion (O2(-)). In the activated complex, electrons are first transferred from NADPH to flavin adenine dinucleotide (FAD) and subsequently transferred via two heme molecules to molecular oxygen, producing superoxide through an outer-sphere reaction. Activation of the NADPH oxidase complex is initiated by the assembly of cytosolic subunits of the NADPH oxidase complex with the core NADPH oxidase complex to form a complex at the plasma membrane or phagosomal membrane. This activation process is initiated by phosphorylation dependent binding of the cytosolic NCF1/p47-phox subunit to the C-terminus of CYBA/p22-phox. This Mus musculus (Mouse) protein is Neutrophil cytosol factor 1.